We begin with the raw amino-acid sequence, 95 residues long: MSVTRDDVAYIAALSRLQFSDEEMATMTTELNSILHYVEKLNEIDTDGVEPLSGIHDQMNVLRDDVEKESIATALALQNAPDRQDRFFKVPKVIG.

Belongs to the GatC family. Heterotrimer of A, B and C subunits.

The enzyme catalyses L-glutamyl-tRNA(Gln) + L-glutamine + ATP + H2O = L-glutaminyl-tRNA(Gln) + L-glutamate + ADP + phosphate + H(+). It carries out the reaction L-aspartyl-tRNA(Asn) + L-glutamine + ATP + H2O = L-asparaginyl-tRNA(Asn) + L-glutamate + ADP + phosphate + 2 H(+). Its function is as follows. Allows the formation of correctly charged Asn-tRNA(Asn) or Gln-tRNA(Gln) through the transamidation of misacylated Asp-tRNA(Asn) or Glu-tRNA(Gln) in organisms which lack either or both of asparaginyl-tRNA or glutaminyl-tRNA synthetases. The reaction takes place in the presence of glutamine and ATP through an activated phospho-Asp-tRNA(Asn) or phospho-Glu-tRNA(Gln). The protein is Aspartyl/glutamyl-tRNA(Asn/Gln) amidotransferase subunit C of Chlorobium limicola (strain DSM 245 / NBRC 103803 / 6330).